The sequence spans 368 residues: Transaldolase (368 aa).

K140 (schiff-base intermediate with substrate) is an active-site residue.

It belongs to the transaldolase family. Type 2 subfamily.

Its subcellular location is the cytoplasm. It carries out the reaction D-sedoheptulose 7-phosphate + D-glyceraldehyde 3-phosphate = D-erythrose 4-phosphate + beta-D-fructose 6-phosphate. The protein operates within carbohydrate degradation; pentose phosphate pathway; D-glyceraldehyde 3-phosphate and beta-D-fructose 6-phosphate from D-ribose 5-phosphate and D-xylulose 5-phosphate (non-oxidative stage): step 2/3. Its function is as follows. Transaldolase is important for the balance of metabolites in the pentose-phosphate pathway. The sequence is that of Transaldolase from Thermobifida fusca (strain YX).